The following is a 299-amino-acid chain: ATP synthase gamma chain (299 aa).

It belongs to the ATPase gamma chain family. As to quaternary structure, F-type ATPases have 2 components, CF(1) - the catalytic core - and CF(0) - the membrane proton channel. CF(1) has five subunits: alpha(3), beta(3), gamma(1), delta(1), epsilon(1). CF(0) has three main subunits: a, b and c.

It localises to the cell membrane. Its function is as follows. Produces ATP from ADP in the presence of a proton gradient across the membrane. The gamma chain is believed to be important in regulating ATPase activity and the flow of protons through the CF(0) complex. The sequence is that of ATP synthase gamma chain from Leifsonia xyli subsp. xyli (strain CTCB07).